The chain runs to 159 residues: Keratin-associated protein 11-1 (159 aa).

4 repeat units span residues Cys-107 to Val-116, Cys-117 to Val-126, Cys-127 to Ile-136, and Cys-137 to Thr-146. Positions Cys-107–Thr-146 are 4 X 10 AA approximate repeats.

It belongs to the PMG family. As to expression, wool.

Its function is as follows. In the wool cortex, wool keratin intermediate filaments are embedded in an interfilamentous matrix, consisting of wool keratin-associated proteins (KRTAP), which are essential for the formation of a rigid and resistant wool shaft through their extensive disulfide bond cross-linking with abundant cysteine residues of wool keratins. The matrix proteins include the high-sulfur and high-glycine-tyrosine keratins. This chain is Keratin-associated protein 11-1 (KRTAP11-1), found in Capra hircus (Goat).